The following is a 154-amino-acid chain: Snaclec lebecin subunit beta (154 aa).

An N-terminal signal peptide occupies residues 1–23 (MGRIIFVSFGLLVVFLSLSGTGA). 3 disulfides stabilise this stretch: C25-C36, C53-C150, and C125-C142. One can recognise a C-type lectin domain in the interval 32–151 (DEEHCYYVFF…CGDDYPFVCK (120 aa)). N-linked (GlcNAc...) asparagine glycosylation occurs at N139.

In terms of assembly, heterodimer with the alpha subunit (AC W5XDM0); disulfide-linked. In terms of tissue distribution, expressed by the venom gland.

The protein resides in the secreted. Inhibits human breast cancer cells (MDA-MB231) migration and proliferation, as well as their adhesion to fibrinogen and fibronectin. This inhibition may be due to the binding to receptors of the integrin family, probably alpha-v/beta-3 (ITGAV/ITGB3) (40% inhibition of cell adhesion) and alpha-5/beta-1 (ITGA5/ITGB1) (by comparison with lebectin). This is Snaclec lebecin subunit beta from Macrovipera lebetinus (Levantine viper).